A 50-amino-acid polypeptide reads, in one-letter code: Nosiheptide precursor (50 aa).

The thiazole-4-carboxylic acid (Ser-Cys) cross-link spans 38-39; the sequence is SC. The 3-hydroxypyridine-2,5-dicarboxylic acid (Ser-Cys) (with S-47) cross-link spans 38–46; that stretch reads SCTTCECCC. The segment at residues 38 to 47 is a cross-link (3-hydroxypyridine-2,5-dicarboxylic acid (Ser-Ser) (with C-46)); sequence SCTTCECCCS. The thiazole-4-carboxylic acid (Thr-Cys) cross-link spans 41 to 42; sequence TC. 4-hydroxyglutamate is present on glutamate 43. The thiazole-4-carboxylic acid (Glu-Cys) cross-link spans 43–44; that stretch reads EC. A cross-link (2-(cystein-S-ylcarbonyl)-3-methyl-4-(glutam-5-yloxy)methylindole (Glu-Cys)) is located at residues 43–45; sequence ECC. A cross-link (thiazole-4-carboxylic acid (Cys-Cys)) is located at residues 45 to 46; that stretch reads CC. A cross-link (thiazole-4-carboxylic acid (Ser-Cys)) is located at residues 47-48; the sequence is SC. The residue at position 49 (serine 49) is a 2,3-didehydroalanine (Ser). The residue at position 49 (serine 49) is a Serine amide; atypical.

This sequence belongs to the thiocillin family. Post-translationally, the amidation of Ser-49 is produced by the oxidative cleavage of Ser-50 rather than of a glycine, as in eukaryotes.

In terms of biological role, inhibits bacterial protein biosynthesis by binding to ribosomes. Specifically, binds to the complex of 23S rRNA and ribosomal protein L11 (RPLK) in the 50S ribosomal subunit. While allowing a weak binding of elongation factor G (EF-G) to the ribosome and subsequent GTP-hydrolysis, probably impairs conformational changes in both the ribosome and EF-G which are necessary for translocation. In vitro, inhibits Gram-positive bacteria S.aureus strain 209P (MIC=0.0009 ug/ml), S.aureus strain 133 (MIC=0.0019 ug/ml), S.aureus strain B3 (MIC=0.003 ug/ml), S.aureus strain Hb (MIC=0.003 ug/ml), M.citreus strain ATCC 8411 (MIC=0.0038 ug/ml), M.lysodeikticus strain ATCC 4698 (MIC=0.003 ug/ml), S.lutea strain ATCC 9341 (MIC=0.0011 ug/ml), S.faecalis strain ATCC 9790 (MIC=0.0007 ug/ml), S.viridans (MIC=0.0065 ug/ml), S.pyogenes hemolyticus strain Dig7 (MIC=0.00028 ug/ml), D.pneumoniae strain Til (MIC=0.00015 ug/ml), N.catrrhalis (MIC=0.0017 ug/ml), L.casei strain ATCC 6633 (MIC=0.003 ug/ml), B.cereus strain ATCC 6630 (MIC=0.0071 ug/ml) and various isolates of L.monocytogenes. In vitro, inhibits Gram-negative bacterium P.multocida strain A125 (MIC=0.0024 ug/ml) but not M.smegmatis strain ATCC 6630, S.typhimurium, A.aerogenes strain ATCC 8308, P.vulgaris, K.pneumoniae strain ATCC 10031, S.marcescens strain A476, P.aeruginosa strain Bass or B.bronchiseptica strain CN387. Does not inhibit Gram-negative bacterium E.coli strain ATCC 9637 but does inhibit purified ribosomes from E.coli. In vivo, has no systemic effect in mice infected with staphylococci or streptococci when applied orally or subcutaneously. Has a local effect in mice infected subcutaneously or intraperitoneally with staphylococci when applied immediately afterwards. Is not toxic to mice. This chain is Nosiheptide precursor, found in Streptomyces actuosus.